A 303-amino-acid chain; its full sequence is tRNA dimethylallyltransferase (303 aa).

ATP is bound at residue 11–18; the sequence is GPTGVGKS. 13-18 serves as a coordination point for substrate; that stretch reads TGVGKS. 2 interaction with substrate tRNA regions span residues 36 to 39 and 159 to 163; these read DSRQ and QRVLR.

This sequence belongs to the IPP transferase family. In terms of assembly, monomer. The cofactor is Mg(2+).

The catalysed reaction is adenosine(37) in tRNA + dimethylallyl diphosphate = N(6)-dimethylallyladenosine(37) in tRNA + diphosphate. Its function is as follows. Catalyzes the transfer of a dimethylallyl group onto the adenine at position 37 in tRNAs that read codons beginning with uridine, leading to the formation of N6-(dimethylallyl)adenosine (i(6)A). The sequence is that of tRNA dimethylallyltransferase from Lawsonia intracellularis (strain PHE/MN1-00).